The chain runs to 1006 residues: Probable beta-galactosidase A (1006 aa).

The signal sequence occupies residues 1-18; sequence MKLLSVCAVALLAAQAAG. Substrate contacts are provided by Tyr-96, Asn-140, Ala-141, and Glu-142. N-linked (GlcNAc...) asparagine glycosylation is present at Asn-156. Residue Asn-199 participates in substrate binding. The active-site Proton donor is the Glu-200. An intrachain disulfide couples Cys-205 to Cys-206. Asn-207 is a glycosylation site (N-linked (GlcNAc...) asparagine). A substrate-binding site is contributed by Tyr-260. Cys-266 and Cys-315 form a disulfide bridge. The Nucleophile role is filled by Glu-298. Residue Tyr-364 coordinates substrate. 6 N-linked (GlcNAc...) asparagine glycosylation sites follow: Asn-373, Asn-402, Asn-422, Asn-622, Asn-777, and Asn-914.

This sequence belongs to the glycosyl hydrolase 35 family.

The protein localises to the secreted. The enzyme catalyses Hydrolysis of terminal non-reducing beta-D-galactose residues in beta-D-galactosides.. Its function is as follows. Cleaves beta-linked terminal galactosyl residues from gangliosides, glycoproteins, and glycosaminoglycans. This Neosartorya fischeri (strain ATCC 1020 / DSM 3700 / CBS 544.65 / FGSC A1164 / JCM 1740 / NRRL 181 / WB 181) (Aspergillus fischerianus) protein is Probable beta-galactosidase A (lacA).